Here is a 150-residue protein sequence, read N- to C-terminus: uncharacterized protein (150 aa).

A signal peptide spans 1 to 39; the sequence is MKQRFSQVATVIFFVMSIRSPRNLGFFFTLALFVVLVCS.

This is an uncharacterized protein from Saccharomyces cerevisiae (strain ATCC 204508 / S288c) (Baker's yeast).